Here is a 51-residue protein sequence, read N- to C-terminus: rpoE leader peptide (51 aa).

Its function is as follows. A short protein whose stop codon overlaps with the start codon of downstream rpoE; a premature stop codon at position 12 results in decreased expression of ECF sigma factor RpoE, thus they are translationally coupled. In Escherichia coli (strain K12), this protein is rpoE leader peptide.